The following is a 362-amino-acid chain: UDP-N-acetylglucosamine--N-acetylmuramyl-(pentapeptide) pyrophosphoryl-undecaprenol N-acetylglucosamine transferase (362 aa).

Residues 21–23 (TGG), asparagine 129, arginine 170, serine 198, and glutamine 290 contribute to the UDP-N-acetyl-alpha-D-glucosamine site.

The protein belongs to the glycosyltransferase 28 family. MurG subfamily.

It localises to the cell inner membrane. The catalysed reaction is di-trans,octa-cis-undecaprenyl diphospho-N-acetyl-alpha-D-muramoyl-L-alanyl-D-glutamyl-meso-2,6-diaminopimeloyl-D-alanyl-D-alanine + UDP-N-acetyl-alpha-D-glucosamine = di-trans,octa-cis-undecaprenyl diphospho-[N-acetyl-alpha-D-glucosaminyl-(1-&gt;4)]-N-acetyl-alpha-D-muramoyl-L-alanyl-D-glutamyl-meso-2,6-diaminopimeloyl-D-alanyl-D-alanine + UDP + H(+). It functions in the pathway cell wall biogenesis; peptidoglycan biosynthesis. Its function is as follows. Cell wall formation. Catalyzes the transfer of a GlcNAc subunit on undecaprenyl-pyrophosphoryl-MurNAc-pentapeptide (lipid intermediate I) to form undecaprenyl-pyrophosphoryl-MurNAc-(pentapeptide)GlcNAc (lipid intermediate II). This Synechococcus sp. (strain JA-3-3Ab) (Cyanobacteria bacterium Yellowstone A-Prime) protein is UDP-N-acetylglucosamine--N-acetylmuramyl-(pentapeptide) pyrophosphoryl-undecaprenol N-acetylglucosamine transferase.